Consider the following 328-residue polypeptide: Arabinose 5-phosphate isomerase KdsD (328 aa).

In terms of domain architecture, SIS spans Ala41–Phe184. Residues Gly75–Thr76, His82, His88, Ala114–His123, and Lys148–Pro150 each bind substrate. His82 provides a ligand contact to Zn(2+). The 59-residue stretch at Met210–Met268 folds into the CBS 1 domain. Glu275 provides a ligand contact to substrate. Residues Met277 to Val328 form the CBS 2 domain.

This sequence belongs to the SIS family. GutQ/KpsF subfamily. As to quaternary structure, homotetramer.

The enzyme catalyses D-arabinose 5-phosphate = D-ribulose 5-phosphate. It participates in carbohydrate biosynthesis; 3-deoxy-D-manno-octulosonate biosynthesis; 3-deoxy-D-manno-octulosonate from D-ribulose 5-phosphate: step 1/3. It functions in the pathway bacterial outer membrane biogenesis; lipopolysaccharide biosynthesis. Its function is as follows. Involved in the biosynthesis of 3-deoxy-D-manno-octulosonate (KDO), a unique 8-carbon sugar component of lipopolysaccharides (LPSs). Catalyzes the reversible aldol-ketol isomerization between D-ribulose 5-phosphate (Ru5P) and D-arabinose 5-phosphate (A5P). This is Arabinose 5-phosphate isomerase KdsD (kdsD) from Salmonella typhimurium (strain LT2 / SGSC1412 / ATCC 700720).